Consider the following 66-residue polypeptide: Large ribosomal subunit protein bL35 (66 aa).

Residues Met-1 to Arg-16 show a composition bias toward basic residues. Residues Met-1–Gly-21 form a disordered region.

The protein belongs to the bacterial ribosomal protein bL35 family.

The chain is Large ribosomal subunit protein bL35 from Streptococcus pneumoniae serotype 2 (strain D39 / NCTC 7466).